Reading from the N-terminus, the 496-residue chain is Ribose import ATP-binding protein RbsA (496 aa).

2 ABC transporter domains span residues 5–241 (LQMK…VGRE) and 252–496 (SPGE…VGGE). 37-44 (GENGAGKS) is a binding site for ATP.

It belongs to the ABC transporter superfamily. Ribose importer (TC 3.A.1.2.1) family. In terms of assembly, the complex is composed of an ATP-binding protein (RbsA), two transmembrane proteins (RbsC) and a solute-binding protein (RbsB).

The protein resides in the cell membrane. The catalysed reaction is D-ribose(out) + ATP + H2O = D-ribose(in) + ADP + phosphate + H(+). Functionally, part of the ABC transporter complex RbsABC involved in ribose import. Responsible for energy coupling to the transport system. This chain is Ribose import ATP-binding protein RbsA, found in Caldanaerobacter subterraneus subsp. tengcongensis (strain DSM 15242 / JCM 11007 / NBRC 100824 / MB4) (Thermoanaerobacter tengcongensis).